Consider the following 322-residue polypeptide: MKVILDLLNNDPRTTQRTERPRHPEKANRPDTPMESRPAWIRVKAPGSAQWTETQRIVRENKLVTVCEEASCPNIGECWAKKHATFMIMGDTCTRACAFCNVRTGLPGPLDADEPGKVADAVAKLGLEHVVVTSVDRDDLADGGAAHFAATIAAIRAMSPATSIEILTPDFLRKHGALETVVAARPDVLNHNLETVPSKYLAVRPGARYFHSVRLLQRAKELDPRIFTKSGIMVGLGEDRSEVLQLMDDLRSADVDFLTIGQYLQPTRKHHAVMRFVPPDEFEAYEKTAYAKGFLMVSATPLTRSSHHAGDDFRKLRERRRA.

The tract at residues M1–S36 is disordered. Over residues T14–M34 the composition is skewed to basic and acidic residues. [4Fe-4S] cluster-binding residues include C67, C72, C78, C93, C97, C100, and S306. The Radical SAM core domain maps to W79 to L295.

This sequence belongs to the radical SAM superfamily. Lipoyl synthase family. The cofactor is [4Fe-4S] cluster.

Its subcellular location is the cytoplasm. It catalyses the reaction [[Fe-S] cluster scaffold protein carrying a second [4Fe-4S](2+) cluster] + N(6)-octanoyl-L-lysyl-[protein] + 2 oxidized [2Fe-2S]-[ferredoxin] + 2 S-adenosyl-L-methionine + 4 H(+) = [[Fe-S] cluster scaffold protein] + N(6)-[(R)-dihydrolipoyl]-L-lysyl-[protein] + 4 Fe(3+) + 2 hydrogen sulfide + 2 5'-deoxyadenosine + 2 L-methionine + 2 reduced [2Fe-2S]-[ferredoxin]. Its pathway is protein modification; protein lipoylation via endogenous pathway; protein N(6)-(lipoyl)lysine from octanoyl-[acyl-carrier-protein]: step 2/2. Catalyzes the radical-mediated insertion of two sulfur atoms into the C-6 and C-8 positions of the octanoyl moiety bound to the lipoyl domains of lipoate-dependent enzymes, thereby converting the octanoylated domains into lipoylated derivatives. The chain is Lipoyl synthase 2 from Bradyrhizobium diazoefficiens (strain JCM 10833 / BCRC 13528 / IAM 13628 / NBRC 14792 / USDA 110).